The sequence spans 209 residues: ATP-dependent dethiobiotin synthetase BioD (209 aa).

Residue 13–18 coordinates ATP; that stretch reads DVGKTV. Threonine 17 contacts Mg(2+). Lysine 33 is an active-site residue. Residue glutamate 100 coordinates Mg(2+). ATP is bound by residues 100 to 103 and 184 to 186; these read EGAG and PRL.

The protein belongs to the dethiobiotin synthetase family. As to quaternary structure, homodimer. Mg(2+) is required as a cofactor.

The protein localises to the cytoplasm. The enzyme catalyses (7R,8S)-7,8-diammoniononanoate + CO2 + ATP = (4R,5S)-dethiobiotin + ADP + phosphate + 3 H(+). It participates in cofactor biosynthesis; biotin biosynthesis; biotin from 7,8-diaminononanoate: step 1/2. Functionally, catalyzes a mechanistically unusual reaction, the ATP-dependent insertion of CO2 between the N7 and N8 nitrogen atoms of 7,8-diaminopelargonic acid (DAPA, also called 7,8-diammoniononanoate) to form a ureido ring. This Rhizorhabdus wittichii (strain DSM 6014 / CCUG 31198 / JCM 15750 / NBRC 105917 / EY 4224 / RW1) (Sphingomonas wittichii) protein is ATP-dependent dethiobiotin synthetase BioD.